The following is a 255-amino-acid chain: MPGPWLLLALALIFTLTGIPESCALPEAAQEEGAVTPDLPGLENVQVRPERRFLWKDLQRVRGDLGAALDSWITKRQHPGKREEEEKDIEAEERGDLGEGGAWRLHKRQHPGRRANQDKYSWADEEDSDWMPRSWLPDFFLDSWFSDVPQVKRQHPGRRSFPWMESDVTKRQHPGRRFIDPELQRSWEEKEGEGVLMPEKRQHPGKRALGHPCGPQGTCGQTGLLQLLGDLSRGQETLVKQSPQVEPWDKEPLEE.

Positions 1-24 are cleaved as a signal peptide; sequence MPGPWLLLALALIFTLTGIPESCA. Residues 76-102 are disordered; that stretch reads RQHPGKREEEEKDIEAEERGDLGEGGA. Proline amide occurs at positions 79 and 111. At glutamine 154 the chain carries Pyrrolidone carboxylic acid. Position 156 is a proline amide (proline 156). Residue glutamine 172 is modified to Pyrrolidone carboxylic acid. At proline 174 the chain carries Proline amide. Residues 184-202 are compositionally biased toward basic and acidic residues; the sequence is QRSWEEKEGEGVLMPEKRQ. Disordered stretches follow at residues 184-214 and 235-255; these read QRSW…HPCG and QETL…PLEE. Position 204 is a proline amide (proline 204). Positions 235–244 are enriched in polar residues; it reads QETLVKQSPQ.

Belongs to the TRH family.

The protein resides in the secreted. Its function is as follows. Functions as a regulator of the biosynthesis of TSH in the anterior pituitary gland and as a neurotransmitter/ neuromodulator in the central and peripheral nervous systems. This is Pro-thyrotropin-releasing hormone (Trh) from Rattus norvegicus (Rat).